The chain runs to 446 residues: N-succinylarginine dihydrolase (446 aa).

Substrate is bound by residues 19 to 28, Asn110, and 137 to 138; these read AGLSYGNVAS and HR. Glu174 is an active-site residue. Arg214 contacts substrate. His250 is an active-site residue. 2 residues coordinate substrate: Asp252 and Asn363. The active-site Nucleophile is Cys369.

Belongs to the succinylarginine dihydrolase family. As to quaternary structure, homodimer.

The catalysed reaction is N(2)-succinyl-L-arginine + 2 H2O + 2 H(+) = N(2)-succinyl-L-ornithine + 2 NH4(+) + CO2. It participates in amino-acid degradation; L-arginine degradation via AST pathway; L-glutamate and succinate from L-arginine: step 2/5. Functionally, catalyzes the hydrolysis of N(2)-succinylarginine into N(2)-succinylornithine, ammonia and CO(2). This Pseudoalteromonas atlantica (strain T6c / ATCC BAA-1087) protein is N-succinylarginine dihydrolase.